The primary structure comprises 181 residues: Ribosome maturation factor RimM (181 aa).

A PRC barrel domain is found at 103–181 (EGDYYWSQLE…EMVVDWDPEF (79 aa)).

This sequence belongs to the RimM family. In terms of assembly, binds ribosomal protein uS19.

Its subcellular location is the cytoplasm. Its function is as follows. An accessory protein needed during the final step in the assembly of 30S ribosomal subunit, possibly for assembly of the head region. Essential for efficient processing of 16S rRNA. May be needed both before and after RbfA during the maturation of 16S rRNA. It has affinity for free ribosomal 30S subunits but not for 70S ribosomes. The chain is Ribosome maturation factor RimM from Marinomonas sp. (strain MWYL1).